Here is a 124-residue protein sequence, read N- to C-terminus: Late histone H2A.2.1 (124 aa).

Residues 1 to 18 show a composition bias toward basic residues; it reads MSGRGKGAKAKSKAKSRS. Residues 1–21 form a disordered region; the sequence is MSGRGKGAKAKSKAKSRSSRA. Ser-2 carries the post-translational modification N-acetylserine. Position 2 is a phosphoserine (Ser-2). Gln-104 carries the N5-methylglutamine modification. Residue Lys-119 forms a Glycyl lysine isopeptide (Lys-Gly) (interchain with G-Cter in ubiquitin) linkage.

This sequence belongs to the histone H2A family. In terms of assembly, the nucleosome is a histone octamer containing two molecules each of H2A, H2B, H3 and H4 assembled in one H3-H4 heterotetramer and two H2A-H2B heterodimers. The octamer wraps approximately 147 bp of DNA. Monoubiquitination of Lys-119 gives a specific tag for epigenetic transcriptional repression. In terms of processing, phosphorylation of Ser-2 directly represses transcription.

It is found in the nucleus. The protein resides in the chromosome. In terms of biological role, core component of nucleosome. Nucleosomes wrap and compact DNA into chromatin, limiting DNA accessibility to the cellular machineries which require DNA as a template. Histones thereby play a central role in transcription regulation, DNA repair, DNA replication and chromosomal stability. DNA accessibility is regulated via a complex set of post-translational modifications of histones, also called histone code, and nucleosome remodeling. The protein is Late histone H2A.2.1 of Psammechinus miliaris (Green sea urchin).